Here is a 149-residue protein sequence, read N- to C-terminus: Transcriptional repressor NrdR (149 aa).

A zinc finger spans residues C3–C34. Residues P49–E139 form the ATP-cone domain.

The protein belongs to the NrdR family. Requires Zn(2+) as cofactor.

Its function is as follows. Negatively regulates transcription of bacterial ribonucleotide reductase nrd genes and operons by binding to NrdR-boxes. The polypeptide is Transcriptional repressor NrdR (Polaromonas sp. (strain JS666 / ATCC BAA-500)).